The following is a 191-amino-acid chain: Shikimate kinase (191 aa).

Gly-14–Thr-19 is a binding site for ATP. Ser-18 lines the Mg(2+) pocket. Asp-36, Arg-60, and Gly-82 together coordinate substrate. Arg-120 serves as a coordination point for ATP. Arg-147 serves as a coordination point for substrate.

It belongs to the shikimate kinase family. As to quaternary structure, monomer. The cofactor is Mg(2+).

Its subcellular location is the cytoplasm. It carries out the reaction shikimate + ATP = 3-phosphoshikimate + ADP + H(+). It participates in metabolic intermediate biosynthesis; chorismate biosynthesis; chorismate from D-erythrose 4-phosphate and phosphoenolpyruvate: step 5/7. Catalyzes the specific phosphorylation of the 3-hydroxyl group of shikimic acid using ATP as a cosubstrate. The chain is Shikimate kinase from Chlorobaculum tepidum (strain ATCC 49652 / DSM 12025 / NBRC 103806 / TLS) (Chlorobium tepidum).